Consider the following 130-residue polypeptide: Early 3 receptor internalization and degradation beta protein (130 aa).

An N-terminal signal peptide occupies residues 1–19; sequence MKRSVIFVLLIFCALPVLC. Residues 53 to 77 form a helical membrane-spanning segment; sequence AWLYAIISVMVFCSTIFALAIYPYL. Positions 122–125 are tyrosine-based sorting motif; that stretch reads YFNL.

It belongs to the adenoviridae E3_RID-beta family. Interacts with E3 RID-alpha and E3 CR1-alpha. In terms of processing, phosphorylated on serine. Post-translationally, O-glycosylated, but not N-glycosylated.

It localises to the host membrane. Its function is as follows. Prevents infected cell apoptosis induced by the host immune system. Acts by down-regulating a number of cell surface receptors in the tumor necrosis factor (TNF) receptor superfamily, namely FAS, TNFRSF10A/TRAIL receptor 1, and TNFRSF10B/TRAIL receptor 2. Down-regulation of these death receptors protects adenovirus-infected cells from apoptosis induced by the death receptor ligands Fas ligand and TRAIL. RID complex also down-regulates certain tyrosine kinase cell surface receptors, especially the epidermal growth factor receptor (EGFR). RID-mediated Fas and EGFR down-regulation occurs via endocytosis of the receptors into endosomes followed by transport to and degradation within lysosomes. This Human adenovirus C serotype 2 (HAdV-2) protein is Early 3 receptor internalization and degradation beta protein.